The sequence spans 323 residues: DNA repair and recombination protein RadA (323 aa).

115-122 (GEFGSGKT) is an ATP binding site.

The protein belongs to the eukaryotic RecA-like protein family.

In terms of biological role, involved in DNA repair and in homologous recombination. Binds and assemble on single-stranded DNA to form a nucleoprotein filament. Hydrolyzes ATP in a ssDNA-dependent manner and promotes DNA strand exchange between homologous DNA molecules. The sequence is that of DNA repair and recombination protein RadA from Thermoplasma volcanium (strain ATCC 51530 / DSM 4299 / JCM 9571 / NBRC 15438 / GSS1).